A 298-amino-acid polypeptide reads, in one-letter code: Oxygen-dependent coproporphyrinogen-III oxidase (298 aa).

Ser-92 is a binding site for substrate. Residues His-96 and His-106 each contribute to the a divalent metal cation site. His-106 (proton donor) is an active-site residue. 108–110 (NVR) serves as a coordination point for substrate. A divalent metal cation contacts are provided by His-145 and His-175. An important for dimerization region spans residues 239-274 (YVEFNLVYDRGTLFGLQSGGRSESILMSLPPRVRWE). 257–259 (GGR) contacts substrate.

This sequence belongs to the aerobic coproporphyrinogen-III oxidase family. Homodimer. It depends on a divalent metal cation as a cofactor.

The protein resides in the cytoplasm. It carries out the reaction coproporphyrinogen III + O2 + 2 H(+) = protoporphyrinogen IX + 2 CO2 + 2 H2O. Its pathway is porphyrin-containing compound metabolism; protoporphyrin-IX biosynthesis; protoporphyrinogen-IX from coproporphyrinogen-III (O2 route): step 1/1. Its function is as follows. Involved in the heme biosynthesis. Catalyzes the aerobic oxidative decarboxylation of propionate groups of rings A and B of coproporphyrinogen-III to yield the vinyl groups in protoporphyrinogen-IX. The chain is Oxygen-dependent coproporphyrinogen-III oxidase from Stenotrophomonas maltophilia (strain R551-3).